We begin with the raw amino-acid sequence, 831 residues long: MELSMFGREDTNSSQWGEVHGPFMLEEIVCQAQNMLTSRGIFMKSNPLKYALPLLLLQMSVIIVTSRLIFRVLQPLKQGMISAQVLTGVVLGPSFLGHNVIYMNMFLPAGGKIIIQTLSNVGFVIHLFLLGLKIDGSIIRKAGSKAILIGTASYAFPFSLGNLTIMFISKTMGLPSDVISCTSSAISLSSMTSFPVTTTVLAELNILNSELGRLATHCSMVCEVCSWFVALAFNLYTRDRTMTSLYALSMIIGLLLVIYFVFRPIIVWLTQRKTKSMDKKDVVPFFPVLLLLSIASLSGEAMGVHAAFGAFWLGVSLPDGPPLGTELAAKLEMFASNLFLPCFIAISGLQTNFFEITESHEHHVVMIEIILLITYGCKFLGTAAASAYCQTQIGDALCLAFLMCCQGIIEVYTTIVWKDAQVVDTECFNLVIITILFVTGISRFLVVYLYDPSKRYKSKSKRTILNTRQHNLQLRLLLGLYNVENVPSMVNLLEATYPTRFNPISFFTLHLVELKGRAHALLTPHHQMNKLDPNTAQSTHIVNAFQRFEQKYQGALMAQHFTAAAPYSSINNDICTLALDKKATLIVIPFHKQYAIDGTVGQVNGPIRTINLNVLDAAPCSVAIFIDRGETEGRRSVLMTNTWQNVAMLFIGGKDDAEALALCMRMAEKPDLNVTMIHFRHKSALQDEDYSDMSEYNLISDFKSYAANKGKIHYVEEIVRDGVETTQVISSLGDAYDMVLVGRDHDLESSVLYGLTDWSECPELGVIGDMLTSPDFHFSVLVVHQQQGDDLLAMDDSYKLPNVEHQKIGDTGIQQRFSAEEGFTTIDLGKR.

A run of 12 helical transmembrane segments spans residues 50-70, 89-109, 112-132, 147-167, 214-234, 250-270, 282-302, 303-323, 334-354, 364-384, 397-417, and 430-450; these read YALP…RLIF, VVLG…FLPA, KIII…LLGL, ILIG…TIMF, LATH…LAFN, MIIG…VWLT, VVPF…GEAM, GVHA…GPPL, FASN…TNFF, VVMI…GTAA, LCLA…TIVW, and LVII…VYLY.

Belongs to the monovalent cation:proton antiporter 2 (CPA2) transporter (TC 2.A.37) family. CHX (TC 2.A.37.4) subfamily. As to expression, preferentially expressed in pollen before and after germination. Detected in pollen grains within anthers of the flower buds or in pollen on fully open flowers and on the stigma, and in pollen tubes growing in the style. Weakly expressed in roots.

Its subcellular location is the cell membrane. Its function is as follows. High-affinity potassium transporter that plays a role in K(+) acquisition. May operate as a K(+)/H(+) symporter. In Arabidopsis thaliana (Mouse-ear cress), this protein is Cation/H(+) symporter 13 (CHX13).